The chain runs to 79 residues: Protein RALF-like 15 (79 aa).

Residues 1–28 form the signal peptide; sequence MGMSKSIKVIVSLALILFLALAATKVEA. 2 cysteine pairs are disulfide-bonded: C46/C54 and C66/C72.

This sequence belongs to the plant rapid alkalinization factor (RALF) family.

It localises to the secreted. Functionally, cell signaling peptide that may regulate plant stress, growth, and development. Mediates a rapid alkalinization of extracellular space by mediating a transient increase in the cytoplasmic Ca(2+) concentration leading to a calcium-dependent signaling events through a cell surface receptor and a concomitant activation of some intracellular mitogen-activated protein kinases. In Arabidopsis thaliana (Mouse-ear cress), this protein is Protein RALF-like 15 (RALFL15).